Reading from the N-terminus, the 321-residue chain is MSQMVLVADIGGTHARFALMGPDGEAVNPVVLRCADYDGPAPAIKAYLAEHAGGVAPKGGAFAVASVIDGDRIELTNSPWRFSIAETRQAVGLQRLEVVNDFTAVALSVRHLKPEHLMSVGGGMPEAGLPIAVLGPGTGLGVSALIPSASGEWTALATEGGHVTMAAATEREARILDRLRTQFDHVSAERVLSGQGLVNLYQAVAALSGHQAVFSTPDVITKRGLDGSCPVSREAVEVFFAMMGTVAGNLALSLGAKGGVFIAGGILPRMAEAFRLSSFRTRFEAHGRFQPYLAAIPTWLITHPLPAFVGLAGLVTDPKNA.

8–13 lines the ATP pocket; that stretch reads ADIGGT.

Belongs to the bacterial glucokinase family.

The protein localises to the cytoplasm. The enzyme catalyses D-glucose + ATP = D-glucose 6-phosphate + ADP + H(+). The sequence is that of Glucokinase from Paramagnetospirillum magneticum (strain ATCC 700264 / AMB-1) (Magnetospirillum magneticum).